A 4328-amino-acid polypeptide reads, in one-letter code: Cadherin-4 (4328 aa).

The signal sequence occupies residues 1–23 (MKKHRVFHLFLLIFCKAISLVTT). The Extracellular segment spans residues 24–4072 (SSSTEQIFEF…TVLEFLLKAE (4049 aa)). N-linked (GlcNAc...) asparagine glycans are attached at residues Asn-39 and Asn-56. Cadherin domains lie at 108-153 (PLNR…SPVF) and 156-275 (GEQG…NPNI). N-linked (GlcNAc...) asparagine glycosylation is found at Asn-196, Asn-330, Asn-339, Asn-365, Asn-431, Asn-452, and Asn-584. 11 consecutive Cadherin domains span residues 384 to 492 (DNEK…APVF), 507 to 608 (PGDV…SPVF), 609 to 720 (SSFP…SPQF), 721 to 826 (DEVS…PPKC), 827 to 934 (VVQH…AIEF), 935 to 1051 (DDVA…KPMY), 1047 to 1156 (KKPM…SPTF), 1175 to 1262 (RIFA…PPEI), 1265 to 1363 (KKSD…RPKF), 1364 to 1467 (SASH…SPYF), and 1476 to 1570 (VDES…APET). N-linked (GlcNAc...) asparagine glycans are attached at residues Asn-811 and Asn-899. The Cell attachment site motif lies at 1090–1092 (RGD). Asn-1192 is a glycosylation site (N-linked (GlcNAc...) asparagine). The disordered stretch occupies residues 1246-1267 (NSAGQKPRKSKNSPPEISGKKS). Asn-1335 carries N-linked (GlcNAc...) asparagine glycosylation. Asn-1610 carries N-linked (GlcNAc...) asparagine glycosylation. One can recognise a Cadherin 14 domain in the interval 1671 to 1784 (RRQVYRGTIR…IDENDEPPRF (114 aa)). Asn-1895 carries N-linked (GlcNAc...) asparagine glycosylation. The 68-residue stretch at 1917 to 1984 (FSIVNPHEAF…ENINDETPIF (68 aa)) folds into the Cadherin 15 domain. 7 N-linked (GlcNAc...) asparagine glycosylation sites follow: Asn-2059, Asn-2150, Asn-2216, Asn-2367, Asn-2413, Asn-2440, and Asn-2535. 2 consecutive Cadherin domains span residues 2187–2285 (EKLK…MPEF) and 2286–2397 (IRSD…PPRF). Cadherin domains lie at 2429–2505 (LQFS…PPFF), 2506–2608 (VLPF…VPRF), 2609–2712 (SNSH…APAF), 2719–2813 (FTIS…PPQF), 2828–2915 (SPIL…CPEA), 2913–3011 (PEAN…RPKI), 3012–3113 (IEKL…APTF), 3114–3216 (EKST…APKF), and 3217–3326 (EKEK…APTF). Asn-2844, Asn-2916, Asn-2941, Asn-3083, and Asn-3143 each carry an N-linked (GlcNAc...) asparagine glycan. Asn-3330 carries N-linked (GlcNAc...) asparagine glycosylation. Cadherin domains are found at residues 3335–3428 (VQEG…APTM) and 3429–3554 (KPMK…VDEF). A glycan (N-linked (GlcNAc...) asparagine) is linked at Asn-3512. One can recognise an EGF-like 1 domain in the interval 3706–3744 (ETNQCAKSPCEQWQLCIPSVHNSTYECVCPLGMEGDKCS). 10 disulfides stabilise this stretch: Cys-3710–Cys-3721, Cys-3715–Cys-3732, Cys-3734–Cys-3743, Cys-3898–Cys-3925, Cys-3933–Cys-3944, Cys-3938–Cys-3954, Cys-3956–Cys-3965, Cys-3972–Cys-3983, Cys-3977–Cys-3992, and Cys-3994–Cys-4003. Residue Asn-3727 is glycosylated (N-linked (GlcNAc...) asparagine). The 169-residue stretch at 3757–3925 (EAELSVGGDG…MKLFGAQPGC (169 aa)) folds into the Laminin G-like domain. 2 EGF-like domains span residues 3929-3966 (TSSP…NVCE) and 3968-4004 (DLEP…KHCE). An N-linked (GlcNAc...) asparagine glycan is attached at Asn-4043. Residues 4073 to 4093 (IVIVILGVLLLLLVFCLTFIT) form a helical membrane-spanning segment. The Cytoplasmic portion of the chain corresponds to 4094 to 4328 (WKCCKKNRDP…IDEEVNIHIS (235 aa)). Disordered stretches follow at residues 4143–4215 (TSSV…SSLR) and 4268–4311 (NFER…PISL). The segment covering 4178–4196 (TRRDPLPSDKFRRVDETAN) has biased composition (basic and acidic residues). The Cell attachment site motif lies at 4207-4209 (RGD).

In terms of tissue distribution, in larvae and adult, it is expressed in various tissues including pharyngeal muscle, hypodermis and gonad. In the nervous system it is expressed in sensory neurons and motor neurons in the ventral cord.

It is found in the cell membrane. Its function is as follows. Potential calcium-dependent cell-adhesion protein that controls axon guidance in the ventral cord. This is Cadherin-4 from Caenorhabditis elegans.